A 625-amino-acid polypeptide reads, in one-letter code: Chaperone protein HtpG (625 aa).

The segment at 1–341 (MGKRKFKAES…SEDLSLNISR (341 aa)) is a; substrate-binding. Residues 342 to 551 (EMLQHDRQLK…DGEISLEMEK (210 aa)) form a b region. The tract at residues 552 to 625 (IINAMPDDQQ…FTNDICKVMV (74 aa)) is c.

Belongs to the heat shock protein 90 family. As to quaternary structure, homodimer.

It is found in the cytoplasm. In terms of biological role, molecular chaperone. Has ATPase activity. The sequence is that of Chaperone protein HtpG from Oceanobacillus iheyensis (strain DSM 14371 / CIP 107618 / JCM 11309 / KCTC 3954 / HTE831).